A 160-amino-acid polypeptide reads, in one-letter code: M-phase phosphoprotein 6 (160 aa).

Residues Lys37 and Lys86 each participate in a glycyl lysine isopeptide (Lys-Gly) (interchain with G-Cter in SUMO2) cross-link. Ser110 is subject to Phosphoserine. Residues 116 to 133 carry the Nuclear localization signal motif; that stretch reads RRYETLVGTIGKKFARKR. A Glycyl lysine isopeptide (Lys-Gly) (interchain with G-Cter in SUMO2) cross-link involves residue Lys127. Thr147 carries the phosphothreonine modification. Glycyl lysine isopeptide (Lys-Gly) (interchain with G-Cter in SUMO2) cross-links involve residues Lys150 and Lys153.

It belongs to the MPP6 family. In terms of assembly, associates with the RNA exosome complex, mediated by EXOSC3. Interacts with ARHGAP18. Interacts with exosome cofactors EXOSC10 and MTREX. Phosphorylated in M (mitotic) phase.

Its subcellular location is the nucleus. The protein localises to the nucleolus. The protein resides in the cytoplasm. Functionally, RNA-binding protein that associates with the RNA exosome complex. Involved in the 3'-processing of the 7S pre-RNA to the mature 5.8S rRNA and play a role in recruiting the RNA exosome complex to pre-rRNA; this function may include C1D. In Homo sapiens (Human), this protein is M-phase phosphoprotein 6.